Reading from the N-terminus, the 101-residue chain is PAT complex subunit Asterix (101 aa).

The tract at residues Met1–Asp26 is disordered. Residues Met1–Pro27 lie on the Cytoplasmic side of the membrane. A helical transmembrane segment spans residues Thr28 to Leu46. Position 47 (Lys47) is a topological domain, lumenal. The helical transmembrane segment at Leu48–Asn65 threads the bilayer. The Cytoplasmic segment spans residues Ser66–Ser69. The chain crosses the membrane as a helical span at residues Glu70–Tyr90. The Lumenal portion of the chain corresponds to Leu91–Trp101.

The protein belongs to the Asterix family. In terms of assembly, component of the multi-pass translocon (MPT) complex.

It is found in the endoplasmic reticulum membrane. Functionally, component of the multi-pass translocon (MPT) complex that mediates insertion of multi-pass membrane proteins into the lipid bilayer of membranes. The MPT complex takes over after the SEC61 complex: following membrane insertion of the first few transmembrane segments of proteins by the SEC61 complex, the MPT complex occludes the lateral gate of the SEC61 complex to promote insertion of subsequent transmembrane regions. In Gallus gallus (Chicken), this protein is PAT complex subunit Asterix (WDR83OS).